The sequence spans 192 residues: uncharacterized protein (192 aa).

The Nudix hydrolase domain occupies 29 to 160 (QRQAAVLIPV…PLDVYRRGNS (132 aa)). The Nudix box motif lies at 67-89 (GAVDSTDASLIAAALREAQEEVA). Mg(2+)-binding residues include Glu83 and Glu87.

Belongs to the Nudix hydrolase family. PCD1 subfamily. The cofactor is Mn(2+). Requires Mg(2+) as cofactor.

Its function is as follows. Probably mediates the hydrolysis of some nucleoside diphosphate derivatives. This is an uncharacterized protein from Salmonella choleraesuis (strain SC-B67).